The chain runs to 399 residues: PCI domain-containing protein 2 (399 aa).

Ala-2 carries the N-acetylalanine modification. At Ser-45 the chain carries Phosphoserine. The PCI domain occupies 210–391 (ITYKYYVGRK…QKLVVSKQNP (182 aa)).

Belongs to the CSN12 family. Component of the nuclear pore complex (NPC)-associated TREX-2 complex (transcription and export complex 2), composed of at least GANP, 2 copies of ENY2, PCID2, SEM1/DSS1, and either centrin CETN2 or centrin CETN3. The TREX-2 complex also associates with ALYREF/ALY and with the nucleoporin NUP153. Interacts with BRCA2. Interacts with SRCAP chromatin remodeling complex component ZNHIT1; the interaction results in inhibition of SRCAP complex activity, preventing the deposition of histone variant H2AZ1/H2A.Z to lymphoid fate regulator genes and restricting lymphoid lineage commitment. As to expression, highly expressed in bone marrow and haematopoietic progenitor cells but is almost undetectable in mature blood cells.

It localises to the cytoplasm. The protein localises to the nucleus. It is found in the nuclear pore complex. Required for B-cell survival through the regulation of the expression of cell-cycle checkpoint MAD2L1 protein during B cell differentiation. As a component of the TREX-2 complex, involved in the export of mRNAs to the cytoplasm through the nuclear pores. Binds and stabilizes BRCA2 and is thus involved in the control of R-loop-associated DNA damage and transcription-associated genomic instability. Blocks the activity of the SRCAP chromatin remodeling complex by interacting with SRCAP complex member ZNHIT1 and inhibiting its interaction with the complex. This prevents the deposition of histone variant H2AZ1/H2A.Z at the nucleosomes of key lymphoid fate regulator genes which suppresses their expression and restricts lymphoid lineage commitment. The polypeptide is PCI domain-containing protein 2 (Pcid2) (Mus musculus (Mouse)).